A 410-amino-acid polypeptide reads, in one-letter code: MSASQTSDVPTLLVKIFGKDRPGITAGLFDTLAAYSVDVVDIEQVVTRGRIVLCALVTEPPRGLEGDLRATVHSWAESLKLQAEIISGIGDNRPRGFGRSLVTVLGHPLTAEATAAIAARITESGSNIDRIFRLAKYPVTAVEFAVSGVETEPLRTALATEAAALGVDIAVVAAGLHRRAQRLVVMDVDSTLIQDEVIELFAAHAGCEDEVAEVTAAAMRGELDFEQSLHARVALLAGLDASVVDKVRAEVRLTPGARTLIRTLKRLGYQVGVVSGGFTQVTDALQEQLGLDFAQANTLEIVDGRLTGRVTGEIVDRAGKARLLRRFAAAAGVPLSQTVAIGDGANDLDMLNAAGLGVAFNAKPVVREAAHTAVNVPFLDTVLYLLGITREEVEAADTLADDLGDGPGRP.

One can recognise an ACT domain in the interval 13–91 (LVKIFGKDRP…QAEIISGIGD (79 aa)). Asp-187 acts as the Nucleophile in catalysis. Positions 187 and 189 each coordinate Mg(2+). Asp-189 (proton donor) is an active-site residue. Substrate is bound by residues Glu-196, Arg-232, 275–276 (SG), and Lys-320. Asp-343 lines the Mg(2+) pocket. Asn-346 provides a ligand contact to substrate.

It belongs to the HAD-like hydrolase superfamily. SerB family. Mg(2+) is required as a cofactor.

It catalyses the reaction O-phospho-L-serine + H2O = L-serine + phosphate. It carries out the reaction O-phospho-D-serine + H2O = D-serine + phosphate. The protein operates within amino-acid biosynthesis; L-serine biosynthesis; L-serine from 3-phospho-D-glycerate: step 3/3. Catalyzes the dephosphorylation of phosphoserine (P-Ser) in vitro. Also catalyzes the dephosphorylation of phosphothreonine (P-Thr) in vitro. The chain is Phosphoserine phosphatase from Streptomyces coelicolor (strain ATCC BAA-471 / A3(2) / M145).